The following is a 232-amino-acid chain: 5'-methylthioadenosine/S-adenosylhomocysteine nucleosidase (232 aa).

The active-site Proton acceptor is the E12. Residues G78, I152, and 173–174 (ME) contribute to the substrate site. D197 acts as the Proton donor in catalysis.

The protein belongs to the PNP/UDP phosphorylase family. MtnN subfamily. In terms of assembly, homodimer.

The enzyme catalyses S-adenosyl-L-homocysteine + H2O = S-(5-deoxy-D-ribos-5-yl)-L-homocysteine + adenine. It catalyses the reaction S-methyl-5'-thioadenosine + H2O = 5-(methylsulfanyl)-D-ribose + adenine. The catalysed reaction is 5'-deoxyadenosine + H2O = 5-deoxy-D-ribose + adenine. Its pathway is amino-acid biosynthesis; L-methionine biosynthesis via salvage pathway; S-methyl-5-thio-alpha-D-ribose 1-phosphate from S-methyl-5'-thioadenosine (hydrolase route): step 1/2. Its function is as follows. Catalyzes the irreversible cleavage of the glycosidic bond in both 5'-methylthioadenosine (MTA) and S-adenosylhomocysteine (SAH/AdoHcy) to adenine and the corresponding thioribose, 5'-methylthioribose and S-ribosylhomocysteine, respectively. Also cleaves 5'-deoxyadenosine, a toxic by-product of radical S-adenosylmethionine (SAM) enzymes, into 5-deoxyribose and adenine. Thus, is required for in vivo function of the radical SAM enzymes biotin synthase and lipoic acid synthase, that are inhibited by 5'-deoxyadenosine accumulation. This is 5'-methylthioadenosine/S-adenosylhomocysteine nucleosidase from Salmonella agona (strain SL483).